The following is a 431-amino-acid chain: Divalent metal cation transporter MntH (431 aa).

Helical transmembrane passes span 30–50 (WSWT…IDPG), 63–83 (GYTL…IQTL), 106–126 (PLVW…DLAE), 137–159 (LFGL…ALHL), 169–189 (ILIG…LVLS), 209–229 (YALY…VIYL), 257–277 (VILG…MAAA), 287–307 (VATI…VTAS), 309–329 (VFGL…TLSG), 341–361 (IPLW…IMLG), 367–387 (ALVA…VPLL), and 405–425 (VTGV…YVLF).

Belongs to the NRAMP family.

Its subcellular location is the cell inner membrane. Functionally, h(+)-stimulated, divalent metal cation uptake system. The sequence is that of Divalent metal cation transporter MntH from Chromohalobacter salexigens (strain ATCC BAA-138 / DSM 3043 / CIP 106854 / NCIMB 13768 / 1H11).